A 23-amino-acid polypeptide reads, in one-letter code: Protein YqfH (23 aa).

This chain is Protein YqfH, found in Escherichia coli (strain K12).